A 188-amino-acid polypeptide reads, in one-letter code: Putative protein SSX9 (188 aa).

One can recognise a KRAB-related domain in the interval 20 to 83 (KIQKAFDDIA…TGATDLQGND (64 aa)). Positions 114–165 (KKPAEVGNDSKEVPEASGLQNDGKQLCPPGKPTTSEKINKASGPKRGKHAWT) are disordered. Over residues 115–127 (KPAEVGNDSKEVP) the composition is skewed to basic and acidic residues. Ser123 is subject to Phosphoserine. Over residues 156–165 (GPKRGKHAWT) the composition is skewed to basic residues.

This sequence belongs to the SSX family. Not detected in any normal or tumor tissues.

Its function is as follows. Could act as a modulator of transcription. The chain is Putative protein SSX9 from Homo sapiens (Human).